Here is a 186-residue protein sequence, read N- to C-terminus: Threonylcarbamoyl-AMP synthase (186 aa).

A YrdC-like domain is found at 2–186 (PNEFELAVAA…ARTGAIIRPS (185 aa)).

Belongs to the SUA5 family. TsaC subfamily.

It is found in the cytoplasm. The enzyme catalyses L-threonine + hydrogencarbonate + ATP = L-threonylcarbamoyladenylate + diphosphate + H2O. Functionally, required for the formation of a threonylcarbamoyl group on adenosine at position 37 (t(6)A37) in tRNAs that read codons beginning with adenine. Catalyzes the conversion of L-threonine, HCO(3)(-)/CO(2) and ATP to give threonylcarbamoyl-AMP (TC-AMP) as the acyladenylate intermediate, with the release of diphosphate. This Aeromonas hydrophila subsp. hydrophila (strain ATCC 7966 / DSM 30187 / BCRC 13018 / CCUG 14551 / JCM 1027 / KCTC 2358 / NCIMB 9240 / NCTC 8049) protein is Threonylcarbamoyl-AMP synthase.